The chain runs to 312 residues: Methionyl-tRNA formyltransferase (312 aa).

109-112 (SILP) is a (6S)-5,6,7,8-tetrahydrofolate binding site.

Belongs to the Fmt family.

It catalyses the reaction L-methionyl-tRNA(fMet) + (6R)-10-formyltetrahydrofolate = N-formyl-L-methionyl-tRNA(fMet) + (6S)-5,6,7,8-tetrahydrofolate + H(+). Functionally, attaches a formyl group to the free amino group of methionyl-tRNA(fMet). The formyl group appears to play a dual role in the initiator identity of N-formylmethionyl-tRNA by promoting its recognition by IF2 and preventing the misappropriation of this tRNA by the elongation apparatus. This chain is Methionyl-tRNA formyltransferase, found in Dictyoglomus thermophilum (strain ATCC 35947 / DSM 3960 / H-6-12).